A 1070-amino-acid chain; its full sequence is DNA-directed RNA polymerase subunit beta (1070 aa).

The protein belongs to the RNA polymerase beta chain family. As to quaternary structure, in plastids the minimal PEP RNA polymerase catalytic core is composed of four subunits: alpha, beta, beta', and beta''. When a (nuclear-encoded) sigma factor is associated with the core the holoenzyme is formed, which can initiate transcription.

Its subcellular location is the plastid. The protein localises to the chloroplast. The enzyme catalyses RNA(n) + a ribonucleoside 5'-triphosphate = RNA(n+1) + diphosphate. Its function is as follows. DNA-dependent RNA polymerase catalyzes the transcription of DNA into RNA using the four ribonucleoside triphosphates as substrates. This chain is DNA-directed RNA polymerase subunit beta, found in Platanus occidentalis (Sycamore).